The chain runs to 165 residues: Nucleotide-binding protein NATL1_05371 (165 aa).

It belongs to the YajQ family.

Functionally, nucleotide-binding protein. The protein is Nucleotide-binding protein NATL1_05371 of Prochlorococcus marinus (strain NATL1A).